The following is a 202-amino-acid chain: Adenylyl-sulfate kinase (202 aa).

Residue 35 to 42 (GLSGSGKS) participates in ATP binding. Ser109 functions as the Phosphoserine intermediate in the catalytic mechanism.

It belongs to the APS kinase family.

It catalyses the reaction adenosine 5'-phosphosulfate + ATP = 3'-phosphoadenylyl sulfate + ADP + H(+). It functions in the pathway sulfur metabolism; hydrogen sulfide biosynthesis; sulfite from sulfate: step 2/3. Its function is as follows. Catalyzes the synthesis of activated sulfate. In Bacteroides fragilis (strain YCH46), this protein is Adenylyl-sulfate kinase.